Consider the following 295-residue polypeptide: Protease HtpX (295 aa).

The next 2 helical transmembrane spans lie at 5 to 25 (VILFLATNLAVLLVLSISMRL) and 43 to 63 (ALLIFAAIIGFSGSLISLAIS). Position 148 (His-148) interacts with Zn(2+). Glu-149 is an active-site residue. His-152 lines the Zn(2+) pocket. 2 consecutive transmembrane segments (helical) span residues 159-179 (VTLALIQGVVNTFVIFLARII) and 198-218 (FFITTLIAQTVLAILASLIVL). Glu-225 serves as a coordination point for Zn(2+).

It belongs to the peptidase M48B family. Zn(2+) serves as cofactor.

It localises to the cell inner membrane. The protein is Protease HtpX of Nitrosococcus oceani (strain ATCC 19707 / BCRC 17464 / JCM 30415 / NCIMB 11848 / C-107).